The primary structure comprises 288 residues: ATP synthase gamma chain (288 aa).

The protein belongs to the ATPase gamma chain family. In terms of assembly, F-type ATPases have 2 components, CF(1) - the catalytic core - and CF(0) - the membrane proton channel. CF(1) has five subunits: alpha(3), beta(3), gamma(1), delta(1), epsilon(1). CF(0) has three main subunits: a, b and c.

It localises to the cell inner membrane. In terms of biological role, produces ATP from ADP in the presence of a proton gradient across the membrane. The gamma chain is believed to be important in regulating ATPase activity and the flow of protons through the CF(0) complex. The protein is ATP synthase gamma chain of Haemophilus ducreyi (strain 35000HP / ATCC 700724).